A 346-amino-acid polypeptide reads, in one-letter code: MAHRPRWTLSQVTELFEKPLLDLLFEAQQVHRQHFDPRQVQVSTLLSIKTGACPEDCKYCPQSSRYKTGLEAERLMEVEQVLESARKAKAAGSTRFCMGAAWKNPHERDMPYLEQMVQGVKAMGLEACMTLGTLSESQAQRLANAGLDYYNHNLDTSPEFYGNIITTRTYQERLDTLEKVRDAGIKVCSGGIVGLGETVKDRAGLLLQLANLPTPPESVPINMLVKVKGTPLADNDDVDAFDFIRTIAVARIMMPTSYVRLSAGREQMNEQTQAMCFMAGANSIFYGCKLLTTPNPEEDKDLQLFRKLGLNPQQTAVLAGDNEQQQRLEQALMTPDTDEYYNAAAL.

The Radical SAM core domain maps to 38–256 (RQVQVSTLLS…IAVARIMMPT (219 aa)). 3 residues coordinate [4Fe-4S] cluster: C53, C57, and C60. [2Fe-2S] cluster is bound by residues C97, C128, C188, and R260.

The protein belongs to the radical SAM superfamily. Biotin synthase family. In terms of assembly, homodimer. The cofactor is [4Fe-4S] cluster. It depends on [2Fe-2S] cluster as a cofactor.

The enzyme catalyses (4R,5S)-dethiobiotin + (sulfur carrier)-SH + 2 reduced [2Fe-2S]-[ferredoxin] + 2 S-adenosyl-L-methionine = (sulfur carrier)-H + biotin + 2 5'-deoxyadenosine + 2 L-methionine + 2 oxidized [2Fe-2S]-[ferredoxin]. Its pathway is cofactor biosynthesis; biotin biosynthesis; biotin from 7,8-diaminononanoate: step 2/2. Functionally, catalyzes the conversion of dethiobiotin (DTB) to biotin by the insertion of a sulfur atom into dethiobiotin via a radical-based mechanism. This chain is Biotin synthase, found in Escherichia coli (strain K12 / DH10B).